The chain runs to 194 residues: Crossover junction endodeoxyribonuclease RuvC (194 aa).

Active-site residues include D7, E68, and D141. Positions 7, 68, and 141 each coordinate Mg(2+). A disordered region spans residues 162–194; it reads GGEREQHLTAAQRQWAEAAQNSTRRRKNSDRGM. Positions 184-194 are enriched in basic residues; the sequence is TRRRKNSDRGM.

Belongs to the RuvC family. Homodimer which binds Holliday junction (HJ) DNA. The HJ becomes 2-fold symmetrical on binding to RuvC with unstacked arms; it has a different conformation from HJ DNA in complex with RuvA. In the full resolvosome a probable DNA-RuvA(4)-RuvB(12)-RuvC(2) complex forms which resolves the HJ. Requires Mg(2+) as cofactor.

Its subcellular location is the cytoplasm. The catalysed reaction is Endonucleolytic cleavage at a junction such as a reciprocal single-stranded crossover between two homologous DNA duplexes (Holliday junction).. Functionally, the RuvA-RuvB-RuvC complex processes Holliday junction (HJ) DNA during genetic recombination and DNA repair. Endonuclease that resolves HJ intermediates. Cleaves cruciform DNA by making single-stranded nicks across the HJ at symmetrical positions within the homologous arms, yielding a 5'-phosphate and a 3'-hydroxyl group; requires a central core of homology in the junction. The consensus cleavage sequence is 5'-(A/T)TT(C/G)-3'. Cleavage occurs on the 3'-side of the TT dinucleotide at the point of strand exchange. HJ branch migration catalyzed by RuvA-RuvB allows RuvC to scan DNA until it finds its consensus sequence, where it cleaves and resolves the cruciform DNA. In Bifidobacterium longum subsp. infantis (strain ATCC 15697 / DSM 20088 / JCM 1222 / NCTC 11817 / S12), this protein is Crossover junction endodeoxyribonuclease RuvC.